Reading from the N-terminus, the 149-residue chain is Lipoprotein signal peptidase (149 aa).

2 consecutive transmembrane segments (helical) span residues 53-73 (MPGKSWLFFISALLVIMALVI) and 89-109 (GLIAGGALGNLIDRYFYGFVI). Catalysis depends on residues D110 and D124. A helical transmembrane segment spans residues 119–139 (VFNLADSAIVCGGILLLILVL).

This sequence belongs to the peptidase A8 family.

It localises to the cell membrane. It catalyses the reaction Release of signal peptides from bacterial membrane prolipoproteins. Hydrolyzes -Xaa-Yaa-Zaa-|-(S,diacylglyceryl)Cys-, in which Xaa is hydrophobic (preferably Leu), and Yaa (Ala or Ser) and Zaa (Gly or Ala) have small, neutral side chains.. Its pathway is protein modification; lipoprotein biosynthesis (signal peptide cleavage). Its function is as follows. This protein specifically catalyzes the removal of signal peptides from prolipoproteins. The chain is Lipoprotein signal peptidase from Syntrophomonas wolfei subsp. wolfei (strain DSM 2245B / Goettingen).